The following is a 227-amino-acid chain: Cytochrome c oxidase subunit 2 (227 aa).

The Mitochondrial intermembrane segment spans residues 1-14 (MAHPVQLGLQDATS). The chain crosses the membrane as a helical span at residues 15–45 (PVMEELITFHDYALMTISLISFLVLYALFST). Over 46–59 (LTTKLTNTNITDAQ) the chain is Mitochondrial matrix. Residues 60–87 (EMETTWTILPAVILILIALPSLRILYLT) form a helical membrane-spanning segment. Residues 88-227 (DEINNPSFTI…IFEMGPVFTL (140 aa)) are Mitochondrial intermembrane-facing. Residues His161, Cys196, Glu198, Cys200, His204, and Met207 each contribute to the Cu cation site. A Mg(2+)-binding site is contributed by Glu198.

This sequence belongs to the cytochrome c oxidase subunit 2 family. In terms of assembly, component of the cytochrome c oxidase (complex IV, CIV), a multisubunit enzyme composed of 14 subunits. The complex is composed of a catalytic core of 3 subunits MT-CO1, MT-CO2 and MT-CO3, encoded in the mitochondrial DNA, and 11 supernumerary subunits COX4I, COX5A, COX5B, COX6A, COX6B, COX6C, COX7A, COX7B, COX7C, COX8 and NDUFA4, which are encoded in the nuclear genome. The complex exists as a monomer or a dimer and forms supercomplexes (SCs) in the inner mitochondrial membrane with NADH-ubiquinone oxidoreductase (complex I, CI) and ubiquinol-cytochrome c oxidoreductase (cytochrome b-c1 complex, complex III, CIII), resulting in different assemblies (supercomplex SCI(1)III(2)IV(1) and megacomplex MCI(2)III(2)IV(2)). Found in a complex with TMEM177, COA6, COX18, COX20, SCO1 and SCO2. Interacts with TMEM177 in a COX20-dependent manner. Interacts with COX20. Interacts with COX16. Requires Cu cation as cofactor.

The protein localises to the mitochondrion inner membrane. It catalyses the reaction 4 Fe(II)-[cytochrome c] + O2 + 8 H(+)(in) = 4 Fe(III)-[cytochrome c] + 2 H2O + 4 H(+)(out). Functionally, component of the cytochrome c oxidase, the last enzyme in the mitochondrial electron transport chain which drives oxidative phosphorylation. The respiratory chain contains 3 multisubunit complexes succinate dehydrogenase (complex II, CII), ubiquinol-cytochrome c oxidoreductase (cytochrome b-c1 complex, complex III, CIII) and cytochrome c oxidase (complex IV, CIV), that cooperate to transfer electrons derived from NADH and succinate to molecular oxygen, creating an electrochemical gradient over the inner membrane that drives transmembrane transport and the ATP synthase. Cytochrome c oxidase is the component of the respiratory chain that catalyzes the reduction of oxygen to water. Electrons originating from reduced cytochrome c in the intermembrane space (IMS) are transferred via the dinuclear copper A center (CU(A)) of subunit 2 and heme A of subunit 1 to the active site in subunit 1, a binuclear center (BNC) formed by heme A3 and copper B (CU(B)). The BNC reduces molecular oxygen to 2 water molecules using 4 electrons from cytochrome c in the IMS and 4 protons from the mitochondrial matrix. The sequence is that of Cytochrome c oxidase subunit 2 (MT-CO2) from Chlorocebus aethiops (Green monkey).